Consider the following 288-residue polypeptide: Homoserine kinase (288 aa).

Pro79 to Ser89 serves as a coordination point for ATP.

This sequence belongs to the GHMP kinase family. Homoserine kinase subfamily.

Its subcellular location is the cytoplasm. The enzyme catalyses L-homoserine + ATP = O-phospho-L-homoserine + ADP + H(+). Its pathway is amino-acid biosynthesis; L-threonine biosynthesis; L-threonine from L-aspartate: step 4/5. Its function is as follows. Catalyzes the ATP-dependent phosphorylation of L-homoserine to L-homoserine phosphate. The polypeptide is Homoserine kinase (Streptococcus gordonii (strain Challis / ATCC 35105 / BCRC 15272 / CH1 / DL1 / V288)).